A 287-amino-acid chain; its full sequence is Phospholipid phosphatase 2 (287 aa).

The Cytoplasmic segment spans residues 1-4 (MERR). Residues 5–25 (WVFVLLDVLCVLVAALPCAIL) traverse the membrane as a helical segment. Residues 26–51 (TFVNTPYKRGFYCGDDSIRYPYRPDT) are Lumenal-facing. The chain crosses the membrane as a helical span at residues 52 to 72 (ITHGLMAGVIITATVILVSAG). Over 73–87 (EAYLVYTDRLYSRSD) the chain is Cytoplasmic. A helical transmembrane segment spans residues 88-108 (FNNYLAALYKVVGTFLFGAAV). Topologically, residues 109-161 (SQSLTDLAKYMTGRLRPNFLAVCDPDWSRVNCSAYVQVEVCRGSSANVTESRL) are lumenal. A phosphatase sequence motif I region spans residues 117–125 (KYMTGRLRP). 2 N-linked (GlcNAc...) asparagine glycosylation sites follow: Asn139 and Asn155. The chain crosses the membrane as a helical span at residues 162–182 (SFYSGHSSFGMYCMVFLALYV). Residues 164–167 (YSGH) are phosphatase sequence motif II. His167 acts as the Proton donors in catalysis. Residues 183 to 193 (QARLCWKWARL) lie on the Cytoplasmic side of the membrane. A helical membrane pass occupies residues 194–211 (LRPTVQFFLVAFALYVGY). Residues 212–218 (TRVSDHK) lie on the Lumenal side of the membrane. Positions 212-223 (TRVSDHKHHWSD) are phosphatase sequence motif III. His219 (nucleophile) is an active-site residue. Residues 219-239 (HHWSDVLVGLLQGALVASLTV) traverse the membrane as a helical segment. Residues 240–287 (RYISDFFKARPPQHCPEEEDLERKPSLSLTLALGETDCNHYGYPVSSS) are Cytoplasmic-facing.

It belongs to the PA-phosphatase related phosphoesterase family. Forms functional homodimers and homooligomers. Can also form heterooligomers with PLPP1 and PLPP3. N-glycosylated.

The protein localises to the membrane. Its subcellular location is the cell membrane. It is found in the early endosome membrane. The protein resides in the endoplasmic reticulum membrane. It carries out the reaction a 1,2-diacyl-sn-glycero-3-phosphate + H2O = a 1,2-diacyl-sn-glycerol + phosphate. It catalyses the reaction 1,2-dihexadecanoyl-sn-glycero-3-phosphate + H2O = 1,2-dihexadecanoyl-sn-glycerol + phosphate. The enzyme catalyses 1,2-di-(9Z-octadecenoyl)-sn-glycero-3-phosphate + H2O = 1,2-di-(9Z-octadecenoyl)-sn-glycerol + phosphate. The catalysed reaction is a monoacyl-sn-glycero-3-phosphate + H2O = a monoacylglycerol + phosphate. It carries out the reaction (9Z)-octadecenoyl-sn-glycero-3-phosphate + H2O = (9Z-octadecenoyl)-glycerol + phosphate. It catalyses the reaction sphing-4-enine 1-phosphate + H2O = sphing-4-enine + phosphate. The enzyme catalyses an N-acylsphing-4-enine 1-phosphate + H2O = an N-acylsphing-4-enine + phosphate. The catalysed reaction is N-(octanoyl)-sphing-4-enine-1-phosphate + H2O = N-octanoylsphing-4-enine + phosphate. It carries out the reaction N-(9Z-octadecenoyl)-ethanolamine phosphate + H2O = N-(9Z-octadecenoyl) ethanolamine + phosphate. It functions in the pathway lipid metabolism; phospholipid metabolism. Magnesium-independent phospholipid phosphatase. Insensitive to N-ethylmaleimide. Functionally, magnesium-independent phospholipid phosphatase that catalyzes the dephosphorylation of a variety of glycerolipid and sphingolipid phosphate esters including phosphatidate/PA, lysophosphatidate/LPA, sphingosine 1-phosphate/S1P and ceramide 1-phosphate/C1P. Has no apparent extracellular phosphatase activity and therefore most probably acts intracellularly. Also acts on N-oleoyl ethanolamine phosphate/N-(9Z-octadecenoyl)-ethanolamine phosphate, a potential physiological compound. Through dephosphorylation of these bioactive lipid mediators produces new bioactive compounds and may regulate signal transduction in different cellular processes. Indirectly regulates, for instance, cell cycle G1/S phase transition through its phospholipid phosphatase activity. The sequence is that of Phospholipid phosphatase 2 from Bos taurus (Bovine).